A 323-amino-acid chain; its full sequence is Low affinity immunoglobulin gamma Fc region receptor II-c (323 aa).

An N-terminal signal peptide occupies residues methionine 1–glycine 42. The Extracellular portion of the chain corresponds to threonine 43–glycine 223. Ig-like C2-type domains follow at residues proline 48 to threonine 127 and glutamate 131 to threonine 213. Intrachain disulfides connect cysteine 71-cysteine 113 and cysteine 152-cysteine 196. Asparagine 106, asparagine 180, and asparagine 187 each carry an N-linked (GlcNAc...) asparagine glycan. A helical membrane pass occupies residues isoleucine 224–tyrosine 246. Residues cysteine 247 to asparagine 323 lie on the Cytoplasmic side of the membrane. The disordered stretch occupies residues lysine 277–asparagine 323. Tyrosine 294 and tyrosine 310 each carry phosphotyrosine; by SRC-type Tyr-kinases.

In terms of processing, phosphorylated by SRC-type Tyr-kinases such as LYN, BLK, FYN and SYK. Isoform IIC1 is detected in monocytes, macrophages, polymorphonuclear cells and natural killer cells.

The protein localises to the cytoplasm. The protein resides in the cell membrane. In terms of biological role, receptor for the Fc region of complexed immunoglobulins gamma. Low affinity receptor. Involved in a variety of effector and regulatory functions such as phagocytosis of immune complexes and modulation of antibody production by B-cells. The protein is Low affinity immunoglobulin gamma Fc region receptor II-c (FCGR2C) of Homo sapiens (Human).